The chain runs to 236 residues: Aspartate/glutamate leucyltransferase (236 aa).

It belongs to the R-transferase family. Bpt subfamily.

It localises to the cytoplasm. The enzyme catalyses N-terminal L-glutamyl-[protein] + L-leucyl-tRNA(Leu) = N-terminal L-leucyl-L-glutamyl-[protein] + tRNA(Leu) + H(+). It carries out the reaction N-terminal L-aspartyl-[protein] + L-leucyl-tRNA(Leu) = N-terminal L-leucyl-L-aspartyl-[protein] + tRNA(Leu) + H(+). In terms of biological role, functions in the N-end rule pathway of protein degradation where it conjugates Leu from its aminoacyl-tRNA to the N-termini of proteins containing an N-terminal aspartate or glutamate. This chain is Aspartate/glutamate leucyltransferase, found in Halorhodospira halophila (strain DSM 244 / SL1) (Ectothiorhodospira halophila (strain DSM 244 / SL1)).